The primary structure comprises 293 residues: Calcium uniporter protein 2, mitochondrial (293 aa).

A mitochondrion-targeting transit peptide spans 1–33; sequence MWSVMGLVRRTAMSSTVNKASPVRSLLGGFRCL. A helical transmembrane segment spans residues 168–188; the sequence is ILWGGLGYSVVQIGIFVRLTF. The Selectivity filter motif lies at 193-201; sequence WDVMEPITF. E197 contacts Ca(2+). The helical transmembrane segment at 198–218 threads the bilayer; that stretch reads PITFFTTATGIIVGYAYFLMT.

The protein belongs to the MCU (TC 1.A.77) family.

It localises to the mitochondrion inner membrane. It carries out the reaction Ca(2+)(in) = Ca(2+)(out). Mitochondrial inner membrane calcium uniporter that mediates calcium uptake into mitochondria. Constitutes a pore-forming and calcium-conducting subunit. Mitochondrial calcium homeostasis plays key roles in cellular physiology and regulates cell bioenergetics, cytoplasmic calcium signals and activation of cell death pathways. The protein is Calcium uniporter protein 2, mitochondrial of Arabidopsis thaliana (Mouse-ear cress).